The following is a 359-amino-acid chain: tRNA-specific 2-thiouridylase MnmA (359 aa).

ATP-binding positions include 9 to 16 (GMSGGVDS) and Met35. Residue Cys104 is the Nucleophile of the active site. Cys104 and Cys200 are disulfide-bonded. An ATP-binding site is contributed by Gly128. Residues 150 to 152 (KDQ) form an interaction with tRNA region. Catalysis depends on Cys200, which acts as the Cysteine persulfide intermediate. Positions 306–307 (RY) are interaction with tRNA.

This sequence belongs to the MnmA/TRMU family.

It localises to the cytoplasm. It catalyses the reaction S-sulfanyl-L-cysteinyl-[protein] + uridine(34) in tRNA + AH2 + ATP = 2-thiouridine(34) in tRNA + L-cysteinyl-[protein] + A + AMP + diphosphate + H(+). Its function is as follows. Catalyzes the 2-thiolation of uridine at the wobble position (U34) of tRNA, leading to the formation of s(2)U34. The chain is tRNA-specific 2-thiouridylase MnmA from Clostridium perfringens (strain ATCC 13124 / DSM 756 / JCM 1290 / NCIMB 6125 / NCTC 8237 / Type A).